The sequence spans 1322 residues: Protein fantom (1322 aa).

An N-terminal signal peptide occupies residues 1–22 (MVSARYPIEKWSRPQLEDHFHN). A coiled-coil region spans residues 15 to 89 (QLEDHFHNVV…MKLKAAKQQL (75 aa)). The span at 108-119 (RSTFRQPPSTFR) shows a compositional bias: polar residues. Disordered stretches follow at residues 108 to 151 (RSTF…GEKL), 189 to 275 (KSSV…PDQT), and 392 to 418 (RIEE…SQSE). Residues 195-217 (SSPPTRLSTSSSSKSSSSNNNND) are compositionally biased toward low complexity. Residues 224–234 (ELEEMSEMSDD) show a composition bias toward acidic residues. Positions 274–362 (QTEKVLLDKL…EDQKKFEAMR (89 aa)) form a coiled coil. Residues 456–538 (ASENSLARWQ…FMLEEQIRTI (83 aa)) adopt a coiled-coil conformation. Disordered stretches follow at residues 891-1094 (AELH…KPRN) and 1121-1149 (TDPL…PVPL). A compositionally biased stretch (low complexity) spans 918–927 (TDSSDTSFSH). Residues 956–975 (SDGEEEADRIVFDDDDDEIE) show a composition bias toward acidic residues. Residues 984–996 (RDPEPLEVPERQV) are compositionally biased toward basic and acidic residues. Polar residues predominate over residues 1015-1029 (NGTNESKESTPVTQR). The span at 1042 to 1067 (PELEPESGPEPEPVVESEPNEVAETE) shows a compositional bias: acidic residues. Over residues 1068-1080 (EDRKRELKTEELK) the composition is skewed to basic and acidic residues. Positions 1127–1139 (SVPPSESSSTSSP) are enriched in low complexity.

The protein belongs to the RPGRIP1 family. As to expression, expressed at the transition zone at the base of cilia. Expressed in ciliated sensory neurons, including the amphid neurons in the head.

It localises to the cell projection. The protein localises to the cilium. Functionally, thought to have an important role in cilia formation and cilia-mediated chemosensation. Involved in the docking of other MKS/MKSR proteins localized to the transition zone of the cilia. The chain is Protein fantom (mks-5) from Caenorhabditis elegans.